Here is a 458-residue protein sequence, read N- to C-terminus: Exodeoxyribonuclease 7 large subunit (458 aa).

This sequence belongs to the XseA family. Heterooligomer composed of large and small subunits.

The protein localises to the cytoplasm. The enzyme catalyses Exonucleolytic cleavage in either 5'- to 3'- or 3'- to 5'-direction to yield nucleoside 5'-phosphates.. Its function is as follows. Bidirectionally degrades single-stranded DNA into large acid-insoluble oligonucleotides, which are then degraded further into small acid-soluble oligonucleotides. This is Exodeoxyribonuclease 7 large subunit from Escherichia coli (strain UTI89 / UPEC).